The primary structure comprises 551 residues: Structure-specific endonuclease subunit MUS81 (551 aa).

A compositionally biased stretch (basic and acidic residues) spans 84 to 93 (HRTSGGDHAP). The tract at residues 84-130 (HRTSGGDHAPDSPSGENSPAPQGRLAEVQDSSMPVPAQPKAGGSGSY) is disordered. 2 positions are modified to phosphoserine: serine 95 and serine 101. Residues 125-244 (GGSGSYWPAR…PGEETAVPGA (120 aa)) form an interaction with BLM region. The tract at residues 131 to 230 (WPARHSGARV…GLSLLNVGIG (100 aa)) is winged helix domain (WHD); critical for endonuclease activity. In terms of domain architecture, ERCC4 spans 270–372 (LLCVDIGETR…RRVYLVEEHG (103 aa)). Active-site residues include aspartate 274, glutamate 277, and aspartate 307. 5 residues coordinate Mg(2+): aspartate 274, glutamate 277, aspartate 307, glutamate 333, and arginine 334. A helix-hairpin-helix (2HhH); involved in DNA recognition and bending region spans residues 471 to 545 (VREVFARQLM…LSRTLSQLYC (75 aa)).

It belongs to the XPF family. As to quaternary structure, part of the heterodimeric DNA structure-specific endonuclease complex MUS81-EME1. Part of the heterodimeric DNA structure-specific endonuclease complex MUS81-EME2. Interacts with BLM; may stimulate the endonuclease activity of MUS81. Interacts with SLX4/BTBD12; this interaction is direct and links the MUS81-EME1 complex to SLX4, which may coordinate the action of the structure-specific endonuclease during DNA repair. Interacts with DCLRE1B/Apollo. Interacts with RECQL5; this interaction stimulates mitotic DNA synthesis. Interacts with CHEK2. Requires Mg(2+) as cofactor. As to expression, widely expressed.

The protein localises to the nucleus. It localises to the nucleolus. Its function is as follows. Catalytic subunit of two functionally distinct, structure-specific, heterodimeric DNA endonucleases MUS81-EME1 and MUS81-EME2 that are involved in the maintenance of genome stability. Both endonucleases have essentially the same substrate specificity though MUS81-EME2 is more active than its MUS81-EME1 counterpart. Both cleave 3'-flaps and nicked Holliday junctions, and exhibit limited endonuclease activity with 5' flaps and nicked double-stranded DNAs. MUS81-EME2 which is active during the replication of DNA is more specifically involved in replication fork processing. Replication forks frequently encounter obstacles to their passage, including DNA base lesions, DNA interstrand cross-links, difficult-to-replicate sequences, transcription bubbles, or tightly bound proteins. One mechanism for the restart of a stalled replication fork involves nucleolytic cleavage mediated by the MUS81-EME2 endonuclease. By acting upon the stalled fork, MUS81-EME2 generates a DNA double-strand break (DSB) that can be repaired by homologous recombination, leading to the restoration of an active fork. MUS81-EME2 could also function in telomere maintenance. MUS81-EME1, on the other hand, is active later in the cell cycle and functions in the resolution of mitotic recombination intermediates including the Holliday junctions, the four-way DNA intermediates that form during homologous recombination. This Homo sapiens (Human) protein is Structure-specific endonuclease subunit MUS81.